A 256-amino-acid polypeptide reads, in one-letter code: Protein Ta0487 (256 aa).

Belongs to the CinA family.

This Thermoplasma acidophilum (strain ATCC 25905 / DSM 1728 / JCM 9062 / NBRC 15155 / AMRC-C165) protein is Protein Ta0487.